The sequence spans 286 residues: NFU1 iron-sulfur cluster scaffold homolog, mitochondrial (286 aa).

Residues 1-66 (MSKLLTNTAL…RQIQLSGARN (66 aa)) constitute a mitochondrion transit peptide. The interval 182 to 250 (IKELLDTRIR…IPEVESVEQV (69 aa)) is nifU. Residues C219 and C222 each contribute to the [4Fe-4S] cluster site.

This sequence belongs to the NifU family.

It is found in the mitochondrion. Its function is as follows. Molecular scaffold for [Fe-S] cluster assembly of mitochondrial iron-sulfur proteins. The chain is NFU1 iron-sulfur cluster scaffold homolog, mitochondrial from Drosophila ananassae (Fruit fly).